The sequence spans 318 residues: 2-keto-3-deoxygluconate permease (318 aa).

10 consecutive transmembrane segments (helical) span residues 10 to 30, 42 to 62, 76 to 96, 105 to 125, 139 to 159, 162 to 182, 199 to 219, 224 to 244, 254 to 274, and 289 to 309; these read IPGG…TFTP, GLIT…GASI, VLVV…GAFL, LLAG…NGGL, AGAF…VILG, GIAT…LIGF, VQTL…LSVI, FAGI…LILA, TAGI…LLIA, and ALVA…TALW.

This sequence belongs to the KdgT transporter family.

The protein localises to the cell inner membrane. The enzyme catalyses 2-dehydro-3-deoxy-D-gluconate(in) + H(+)(in) = 2-dehydro-3-deoxy-D-gluconate(out) + H(+)(out). In terms of biological role, catalyzes the proton-dependent uptake of 2-keto-3-deoxygluconate (KDG) into the cell. This Pectobacterium atrosepticum (strain SCRI 1043 / ATCC BAA-672) (Erwinia carotovora subsp. atroseptica) protein is 2-keto-3-deoxygluconate permease.